Reading from the N-terminus, the 358-residue chain is cAMP-dependent protein kinase catalytic subunit PRKX (358 aa).

Met-1 bears the N-acetylmethionine mark. The disordered stretch occupies residues 1-34 (MEAPGLAQAAAAESDSRKVAEETPDGAPALCPSP). The 255-residue stretch at 49–303 (FDTLATVGTG…ANDVKHHRWF (255 aa)) folds into the Protein kinase domain. ATP-binding positions include 55–63 (VGTGTFGRV) and Lys-78. The Proton acceptor role is filled by Asp-172. Phosphothreonine is present on Thr-203. The AGC-kinase C-terminal domain occupies 304–358 (RSVDWEAVPQRKLKPPIVPKIAGDGDTSNFETYPENDWDTAAPVPQKDLEIFKNF).

It belongs to the protein kinase superfamily. AGC Ser/Thr protein kinase family. cAMP subfamily. In terms of assembly, like other cAMP-dependent protein kinases, the inactive holoenzyme is probably composed of 2 PRKX catalytic subunits and a dimer of regulatory subunits. Interacts (cAMP-dependent) specifically with the regulatory subunits PRKAR1A and PRKAR1B. Compared to other cAMP-dependent serine/threonine protein kinases, does not interact with the 2 other PKA regulatory subunits PRKAR2A and PRKAR2B. Interacts with cAMP-dependent protein kinase inhibitor/PKI proteins; inhibits PRKX. Interacts with GPKOW. Interacts with SMAD6. Interacts with PKD1; involved in differentiation and controlled morphogenesis of the kidney. Interacts with PIN1 (via WW domain). Post-translationally, phosphorylated; autophosphorylates in vitro. In terms of tissue distribution, widely expressed (at protein level). Specifically expressed in blood by macrophages and granulocytes according to PubMed:9860982.

Its subcellular location is the cytoplasm. The protein resides in the nucleus. It catalyses the reaction L-seryl-[protein] + ATP = O-phospho-L-seryl-[protein] + ADP + H(+). It carries out the reaction L-threonyl-[protein] + ATP = O-phospho-L-threonyl-[protein] + ADP + H(+). With respect to regulation, binding of cAMP to the PRKAR1A or PRKAR1B regulatory subunits induces dissociation of the holoenzyme heterotetramer. The released monomeric PRKX is then active and able to phosphorylate its substrates. Its function is as follows. Serine/threonine protein kinase regulated by and mediating cAMP signaling in cells. Acts through phosphorylation of downstream targets that may include CREB, SMAD6 and PKD1 and has multiple functions in cellular differentiation and epithelial morphogenesis. Regulates myeloid cell differentiation through SMAD6 phosphorylation. Involved in nephrogenesis by stimulating renal epithelial cell migration and tubulogenesis. Also involved in angiogenesis through stimulation of endothelial cell proliferation, migration and vascular-like structure formation. This chain is cAMP-dependent protein kinase catalytic subunit PRKX (PRKX), found in Homo sapiens (Human).